The sequence spans 597 residues: Sulfite reductase [NADPH] flavoprotein alpha-component (597 aa).

The 139-residue stretch at 62 to 200 (VTVLSASQTG…TADKWIQDVV (139 aa)) folds into the Flavodoxin-like domain. Residues 68–73 (SQTGNA), 115–118 (STQG), and 151–160 (LGDTSYPNFC) each bind FMN. One can recognise an FAD-binding FR-type domain in the interval 232–446 (ENPYTAKLIT…VEPNDNFRLP (215 aa)). FAD-binding positions include Thr320, Asn354, 384–387 (RLYS), 402–404 (SVG), and 417–420 (GVAS). NADP(+) contacts are provided by residues 517–518 (SR), 523–527 (KIYVQ), and Asp559. Tyr597 contributes to the FAD binding site.

It belongs to the NADPH-dependent sulphite reductase flavoprotein subunit CysJ family. The protein in the N-terminal section; belongs to the flavodoxin family. This sequence in the C-terminal section; belongs to the flavoprotein pyridine nucleotide cytochrome reductase family. As to quaternary structure, alpha(8)-beta(8). The alpha component is a flavoprotein, the beta component is a hemoprotein. FAD is required as a cofactor. It depends on FMN as a cofactor.

The catalysed reaction is hydrogen sulfide + 3 NADP(+) + 3 H2O = sulfite + 3 NADPH + 4 H(+). It participates in sulfur metabolism; hydrogen sulfide biosynthesis; hydrogen sulfide from sulfite (NADPH route): step 1/1. Its function is as follows. Component of the sulfite reductase complex that catalyzes the 6-electron reduction of sulfite to sulfide. This is one of several activities required for the biosynthesis of L-cysteine from sulfate. The flavoprotein component catalyzes the electron flow from NADPH -&gt; FAD -&gt; FMN to the hemoprotein component. This chain is Sulfite reductase [NADPH] flavoprotein alpha-component, found in Mannheimia succiniciproducens (strain KCTC 0769BP / MBEL55E).